The primary structure comprises 296 residues: Haloalkane dehalogenase (296 aa).

Residues 31 to 155 (PILFQHGNPT…QDRDLFQAFR (125 aa)) enclose the AB hydrolase-1 domain. The active-site Nucleophile is Asp-108. Glu-132 (proton donor) is an active-site residue. His-272 (proton acceptor) is an active-site residue.

It belongs to the haloalkane dehalogenase family. Type 2 subfamily. Monomer.

It localises to the periplasm. The enzyme catalyses 1-haloalkane + H2O = a halide anion + a primary alcohol + H(+). It carries out the reaction (3R,6R)-1,3,4,6-tetrachlorocyclohexa-1,4-diene + 2 H2O = 2,5-dichlorocyclohexa-2,5-dien-1,4-diol + 2 chloride + 2 H(+). It functions in the pathway xenobiotic degradation; gamma-hexachlorocyclohexane degradation. Functionally, catalyzes hydrolytic cleavage of carbon-halogen bonds in halogenated aliphatic compounds, leading to the formation of the corresponding primary alcohols, halide ions and protons. Is involved in the degradation of the important environmental pollutant gamma-hexachlorocyclohexane (gamma-HCH or lindane) as it also catalyzes conversion of 1,3,4,6-tetrachloro-1,4-cyclohexadiene (1,4-TCDN) to 2,5-dichloro-2,5-cyclohexadiene-1,4-diol (2,5-DDOL) via the intermediate 2,4,5-trichloro-2,5-cyclohexadiene-1-ol (2,4,5-DNOL). The chain is Haloalkane dehalogenase from Sphingobium indicum (strain DSM 16412 / CCM 7286 / MTCC 6364 / B90A).